Here is a 60-residue protein sequence, read N- to C-terminus: Ferredoxin-1 (60 aa).

4Fe-4S ferredoxin-type domains lie at 2 to 27 (LYIT…SAGD) and 28 to 60 (DIYV…IVQG). Residues Cys8, Cys11, Cys14, Cys18, Cys37, Cys40, Cys48, and Cys52 each contribute to the [4Fe-4S] cluster site.

[4Fe-4S] cluster serves as cofactor.

In terms of biological role, ferredoxins are iron-sulfur proteins that transfer electrons in a wide variety of metabolic reactions. This is Ferredoxin-1 from Chlorobium limicola.